A 987-amino-acid chain; its full sequence is AP3-complex subunit beta-A (987 aa).

Positions 586 to 662 (QDQLSDLDKQ…ISETSVSADQ (77 aa)) are disordered. Residues 603-613 (DGSEESSETGD) show a composition bias toward acidic residues. Residues 614–631 (ENGSSDYDSESSNGSDFS) are compositionally biased toward low complexity.

The protein belongs to the adaptor complexes large subunit family. As to quaternary structure, adaptor protein complex 3 (AP-3) is a heterotetramer composed of two large adaptins (delta-type subunit and beta-type subunit), a medium adaptin (mu-type subunit) and a small adaptin (sigma-type subunit).

It is found in the cytoplasm. The protein localises to the golgi apparatus. It localises to the cytoplasmic vesicle membrane. Functionally, part of the AP-3 complex, an adaptor-related complex which seems to be clathrin-associated. The complex is associated with the Golgi region as well as more peripheral structures. It facilitates the budding of vesicles from the Golgi membrane and may be directly involved in trafficking to the vacuole. It also function in maintaining the identity of lytic vacuoles and in regulating the transition between storage and lytic vacuoles. This Arabidopsis thaliana (Mouse-ear cress) protein is AP3-complex subunit beta-A (AP3BA).